The following is a 130-amino-acid chain: Large ribosomal subunit protein bL17 (130 aa).

Belongs to the bacterial ribosomal protein bL17 family. Part of the 50S ribosomal subunit. Contacts protein L32.

This Nitrosomonas europaea (strain ATCC 19718 / CIP 103999 / KCTC 2705 / NBRC 14298) protein is Large ribosomal subunit protein bL17.